The chain runs to 791 residues: Splicing factor 3A subunit 1 (791 aa).

The segment at 1–41 (MQAGPVQAVPPPPPVATESKQPIEEEASSKEDPTPSKPVVG) is disordered. Residue Lys-20 forms a Glycyl lysine isopeptide (Lys-Gly) (interchain with G-Cter in SUMO2) linkage. The span at 21-34 (QPIEEEASSKEDPT) shows a compositional bias: basic and acidic residues. One copy of the SURP motif 1 repeat lies at 52–94 (IVDKTASFVARNGPEFEARIRQNEINNPKFNFLNPNDPYHAYY). Residue Lys-55 is modified to N6-acetyllysine. Residue Lys-131 forms a Glycyl lysine isopeptide (Lys-Gly) (interchain with G-Cter in SUMO2) linkage. The stretch at 166–208 (VVKLTAQFVARNGRQFLTQLMQKEQRNYQFDFLRPQHSLFNYF) is one SURP motif 2 repeat. The segment at 318 to 411 (GESEEVEMEV…APAPDEYLVS (94 aa)) is disordered. Ser-320 and Ser-329 each carry phosphoserine. Acidic residues predominate over residues 320–336 (SEEVEMEVESDEEDQEK). Residues 340–351 (TPSQLDQDTQVQ) are compositionally biased toward polar residues. Positions 352 to 362 (DMDEGSDDEEE) are enriched in acidic residues. Phosphoserine is present on Ser-357. Over residues 366–382 (VPPPPETPMPPPLPPTP) the composition is skewed to pro residues. The span at 386–395 (IVRKDYDPKA) shows a compositional bias: basic and acidic residues. The residue at position 411 (Ser-411) is a Phosphoserine. Lys-422 participates in a covalent cross-link: Glycyl lysine isopeptide (Lys-Gly) (interchain with G-Cter in SUMO2). Ser-449 carries the phosphoserine modification. Tyr-454 bears the Phosphotyrosine mark. A compositionally biased stretch (basic and acidic residues) spans 486 to 500 (IGEEEIQKPEEKVTW). 3 disordered regions span residues 486 to 516 (IGEE…AAQA), 528 to 582 (HKAK…AMPP), and 664 to 684 (PMPP…KKLK). Lys-497 is covalently cross-linked (Glycyl lysine isopeptide (Lys-Gly) (interchain with G-Cter in SUMO2)). At Ser-506 the chain carries Phosphoserine. Over residues 507–516 (MARTQQAAQA) the composition is skewed to polar residues. A Glycyl lysine isopeptide (Lys-Gly) (interchain with G-Cter in SUMO2) cross-link involves residue Lys-540. Over residues 561 to 570 (ATNIPSSAPP) the composition is skewed to polar residues. Positions 664–673 (PMPPVHPPPP) are enriched in pro residues. The interval 678 to 700 (PPSKKLKTEDSLMPEEEFLRRNK) is required and sufficient for nuclear import. Lys-684 participates in a covalent cross-link: Glycyl lysine isopeptide (Lys-Gly) (interchain with G-Cter in SUMO2). Residues 705–788 (IKVQVPNMQD…IHLALKERGG (84 aa)) enclose the Ubiquitin-like domain. Phosphotyrosine is present on Tyr-757.

Component of the 17S U2 SnRNP complex, a ribonucleoprotein complex that contains small nuclear RNA (snRNA) U2 and a number of specific proteins. Part of the SF3A subcomplex of the 17S U2 SnRNP complex which is composed of three subunits; SF3A3/SAP61, SF3A2/SAP62 and SF3A1/SAP114. SF3A associates with the splicing factor SF3B and a 12S RNA unit to form the mature 17S U2 small nuclear ribonucleoprotein complex (17S U2 snRNP). SF3A1 functions as a scaffold that interacts directly with both SF3A2 and SF3A3. Identified in the spliceosome 'E' complex, a precursor of the spliceosome 'A' complex. Identified in the spliceosome 'A' and 'B' complexes. Identified in the spliceosome 'C' complex. Interacts with P2RX6; resulting in a reduction of the splicing activity.

The protein localises to the nucleus. Its subcellular location is the nucleus speckle. Functionally, component of the 17S U2 SnRNP complex of the spliceosome, a large ribonucleoprotein complex that removes introns from transcribed pre-mRNAs. The 17S U2 SnRNP complex (1) directly participates in early spliceosome assembly and (2) mediates recognition of the intron branch site during pre-mRNA splicing by promoting the selection of the pre-mRNA branch-site adenosine, the nucleophile for the first step of splicing. Within the 17S U2 SnRNP complex, SF3A1 is part of the SF3A subcomplex that contributes to the assembly of the 17S U2 snRNP, and the subsequent assembly of the pre-spliceosome 'E' complex and the pre-catalytic spliceosome 'A' complex. Involved in pre-mRNA splicing as a component of pre-catalytic spliceosome 'B' complexes. This chain is Splicing factor 3A subunit 1 (Sf3a1), found in Mus musculus (Mouse).